The following is a 218-amino-acid chain: MNCRSEILEVSVEGRQVEEAMLAVLHTILLHRSTGKFHYKKEGTYSIGTVGTQDIDCDFIEFTYVRVSSEELDRALHKAVSEFKDALRNSGSDGIGQVSLEFYQKKKSRWPFSDECIPWEVWTIKVNVVSLANEQERQICREKVGEKLGEKIINIVEVMNRHEYLPKMPTQSEVDNVFDTSLKDVQPYLYKISYQITDSLGTSVTTTMRRLIKDTLAL.

Belongs to the ATG101 family.

The protein localises to the cytoplasm. It localises to the preautophagosomal structure. Its function is as follows. Autophagy factor required for autophagosome formation. This is Autophagy-related protein 101 (atg101) from Xenopus laevis (African clawed frog).